Consider the following 152-residue polypeptide: Large ribosomal subunit protein bL9 (152 aa).

Belongs to the bacterial ribosomal protein bL9 family.

Its function is as follows. Binds to the 23S rRNA. This Acaryochloris marina (strain MBIC 11017) protein is Large ribosomal subunit protein bL9.